The following is a 158-amino-acid chain: Sec-independent protein translocase protein TatB (158 aa).

Residues 2-22 (FDGIGFMELLLIGVLGLVVLG) form a helical membrane-spanning segment. Positions 86–158 (LKQAAQSVNR…DTSSNPKANG (73 aa)) are disordered. Composition is skewed to polar residues over residues 88–107 (QAAQ…SQGT), 113–136 (QIHS…QHLT), and 143–158 (EPSQ…KANG).

This sequence belongs to the TatB family. In terms of assembly, the Tat system comprises two distinct complexes: a TatABC complex, containing multiple copies of TatA, TatB and TatC subunits, and a separate TatA complex, containing only TatA subunits. Substrates initially bind to the TatABC complex, which probably triggers association of the separate TatA complex to form the active translocon.

The protein localises to the cell inner membrane. Part of the twin-arginine translocation (Tat) system that transports large folded proteins containing a characteristic twin-arginine motif in their signal peptide across membranes. Together with TatC, TatB is part of a receptor directly interacting with Tat signal peptides. TatB may form an oligomeric binding site that transiently accommodates folded Tat precursor proteins before their translocation. This Shewanella putrefaciens (strain CN-32 / ATCC BAA-453) protein is Sec-independent protein translocase protein TatB.